We begin with the raw amino-acid sequence, 227 residues long: Biosynthetic peptidoglycan transglycosylase (227 aa).

A helical transmembrane segment spans residues 7–27; the sequence is VALLTLLLLVAAPYVLTLVYG.

Belongs to the glycosyltransferase 51 family.

The protein resides in the cell inner membrane. It catalyses the reaction [GlcNAc-(1-&gt;4)-Mur2Ac(oyl-L-Ala-gamma-D-Glu-L-Lys-D-Ala-D-Ala)](n)-di-trans,octa-cis-undecaprenyl diphosphate + beta-D-GlcNAc-(1-&gt;4)-Mur2Ac(oyl-L-Ala-gamma-D-Glu-L-Lys-D-Ala-D-Ala)-di-trans,octa-cis-undecaprenyl diphosphate = [GlcNAc-(1-&gt;4)-Mur2Ac(oyl-L-Ala-gamma-D-Glu-L-Lys-D-Ala-D-Ala)](n+1)-di-trans,octa-cis-undecaprenyl diphosphate + di-trans,octa-cis-undecaprenyl diphosphate + H(+). It functions in the pathway cell wall biogenesis; peptidoglycan biosynthesis. Peptidoglycan polymerase that catalyzes glycan chain elongation from lipid-linked precursors. This Rhodopseudomonas palustris (strain HaA2) protein is Biosynthetic peptidoglycan transglycosylase.